The chain runs to 523 residues: 2-hydroxyisoflavanone synthase (523 aa).

Residues 2-22 (LVELAITLLVIALFIHLRPTP) form a helical membrane-spanning segment. Cysteine 450 lines the heme pocket.

This sequence belongs to the cytochrome P450 family. Heme serves as cofactor.

It is found in the microsome membrane. The catalysed reaction is (2S)-liquiritigenin + reduced [NADPH--hemoprotein reductase] + O2 = (2R,3S)-2,4',7-trihydroxyisoflavanone + oxidized [NADPH--hemoprotein reductase] + H2O + H(+). The enzyme catalyses (2S)-naringenin + reduced [NADPH--hemoprotein reductase] + O2 = 2-hydroxy-2,3-dihydrogenistein + oxidized [NADPH--hemoprotein reductase] + H2O + H(+). In terms of biological role, 2-hydroxyisoflavanone synthase, which catalyzes the hydroxylation associated with 1,2-aryl migration of flavanones. Converts liquiritigenin and naringenin into highly unstable precursors of the isoflavones daidzein and genistein. The chain is 2-hydroxyisoflavanone synthase (CYP93C2) from Glycyrrhiza uralensis (Chinese licorice).